The primary structure comprises 734 residues: MALRFPRFSQGLAQDPTTRRIWFGIATAHDFESHDDITEERLYQNIFASHFGQLAIIFLWTSGNLFHVAWQGNFEAWVQDPLHVRPIAHAIWDPHFGQPAVEAFTRGGAPGPVNIAYSGVYQWWYTIGLRTNEDLYTGALFLLFLSALSLIAGWLHLQPKWKPSVSWFKNAESRLNHHLSGLFGVSSLAWTGHLVHVAIPGSRGEYVRWNNFLDVLPHPQGLGPFFSGQWNLYAQNPDSSSHLFGTSQGSGTAILTLLGGFHPQTQSLWLTDIAHHHLAIAILFLIAGHMYRTNFGIGHSIKDLLEAHIPPGGRLGRGHKGLYDTINNSIHFQLGLALASLGVITSLVAQHMYSLPAYAFIAQDFTTQAALYTHHQYIAGFIMTGAFAHGAIFFIRDYNPEQNEDNVLARMLDHKEAIISHLSWASLFLGFHTLGLYVHNDVMLAFGTPEKQILIEPIFAQWIQSAHGKTSYGFDVLLSSTNGPAFNAGRSIWLPGWLNAVNENSNSLFLTIGPGDFLVHHAIALGLHTTTLILVKGALDARGSKLMPDKKDFGYSFPCDGPGRGGTCDISAWDAFYLAVFWMLNTIGWVTFYWHWKHITLWQGNVSQFNESSTYLMGWLRDYLWLNSSQLINGYNPFGMNSLSVWAWMFLFGHLVWATGFMFLISWRGYWQELIETLAWAHERTPLANLIRWRDKPVALSIVQARLVGLAHFSVGYIFTYAAFLIASTSGKFG.

8 consecutive transmembrane segments (helical) span residues 46–69 (IFASHFGQLAIIFLWTSGNLFHVA), 135–158 (LYTGALFLLFLSALSLIAGWLHLQ), 175–199 (LNHHLSGLFGVSSLAWTGHLVHVAI), 273–291 (IAHHHLAIAILFLIAGHMY), 330–353 (IHFQLGLALASLGVITSLVAQHMY), 369–395 (AALYTHHQYIAGFIMTGAFAHGAIFFI), 417–439 (AIISHLSWASLFLGFHTLGLYVH), and 517–535 (FLVHHAIALGLHTTTLILV). 2 residues coordinate [4Fe-4S] cluster: Cys559 and Cys568. A run of 2 helical transmembrane segments spans residues 575–596 (AFYLAVFWMLNTIGWVTFYWHW) and 643–665 (LSVWAWMFLFGHLVWATGFMFLI). 3 residues coordinate chlorophyll a: His654, Met662, and Tyr670. Trp671 contacts phylloquinone. The chain crosses the membrane as a helical span at residues 707-727 (LVGLAHFSVGYIFTYAAFLIA).

Belongs to the PsaA/PsaB family. In terms of assembly, the PsaA/B heterodimer binds the P700 chlorophyll special pair and subsequent electron acceptors. PSI consists of a core antenna complex that captures photons, and an electron transfer chain that converts photonic excitation into a charge separation. The eukaryotic PSI reaction center is composed of at least 11 subunits. It depends on P700 is a chlorophyll a/chlorophyll a' dimer, A0 is one or more chlorophyll a, A1 is one or both phylloquinones and FX is a shared 4Fe-4S iron-sulfur center. as a cofactor.

The protein resides in the plastid. The protein localises to the chloroplast thylakoid membrane. It carries out the reaction reduced [plastocyanin] + hnu + oxidized [2Fe-2S]-[ferredoxin] = oxidized [plastocyanin] + reduced [2Fe-2S]-[ferredoxin]. In terms of biological role, psaA and PsaB bind P700, the primary electron donor of photosystem I (PSI), as well as the electron acceptors A0, A1 and FX. PSI is a plastocyanin-ferredoxin oxidoreductase, converting photonic excitation into a charge separation, which transfers an electron from the donor P700 chlorophyll pair to the spectroscopically characterized acceptors A0, A1, FX, FA and FB in turn. Oxidized P700 is reduced on the lumenal side of the thylakoid membrane by plastocyanin. This is Photosystem I P700 chlorophyll a apoprotein A2 from Gossypium hirsutum (Upland cotton).